Here is a 287-residue protein sequence, read N- to C-terminus: Gene 31 protein (287 aa).

Residues 13-58 (AGRPAGLPGRGGQPGLAGAEGGEGRAGPGAHGDGVRQGGGLQTGGA) are disordered. The segment covering 20–58 (PGRGGQPGLAGAEGGEGRAGPGAHGDGVRQGGGLQTGGA) has biased composition (gly residues).

This sequence belongs to the herpesviridae UL92 family.

This Equine herpesvirus 2 (strain 86/87) (EHV-2) protein is Gene 31 protein (31).